Here is an 89-residue protein sequence, read N- to C-terminus: Small ribosomal subunit protein uS15 (89 aa).

The protein belongs to the universal ribosomal protein uS15 family. In terms of assembly, part of the 30S ribosomal subunit. Forms a bridge to the 50S subunit in the 70S ribosome, contacting the 23S rRNA.

Its function is as follows. One of the primary rRNA binding proteins, it binds directly to 16S rRNA where it helps nucleate assembly of the platform of the 30S subunit by binding and bridging several RNA helices of the 16S rRNA. In terms of biological role, forms an intersubunit bridge (bridge B4) with the 23S rRNA of the 50S subunit in the ribosome. The chain is Small ribosomal subunit protein uS15 from Pectobacterium carotovorum subsp. carotovorum (strain PC1).